We begin with the raw amino-acid sequence, 1073 residues long: Guanylyl cyclase C (1073 aa).

The signal sequence occupies residues 1-23; it reads MKTLLLDLALWSLLFQPGWLSFS. Residues 24-430 are Extracellular-facing; the sequence is SQVSQNCHNG…PNDITGRGPQ (407 aa). Asparagine 32, asparagine 75, asparagine 79, asparagine 195, asparagine 284, asparagine 307, asparagine 345, and asparagine 402 each carry an N-linked (GlcNAc...) asparagine glycan. The helical transmembrane segment at 431–454 threads the bilayer; the sequence is ILMIAVFTLTGAVVLLLLVALLML. Over 455–1073 the chain is Cytoplasmic; it reads RKYRKDYELR…NTTDKESTYF (619 aa). The region spanning 489-749 is the Protein kinase domain; that stretch reads LKIDDDKRRD…KIETTLAKIF (261 aa). The 131-residue stretch at 824 to 954 folds into the Guanylate cyclase domain; that stretch reads TIYFSDIVGF…DTVNTASRME (131 aa).

The protein belongs to the adenylyl cyclase class-4/guanylyl cyclase family. In terms of assembly, homotrimer. Interacts via its C-terminal region with NHERF4. Interacts with the lectin chaperone VIP36. In terms of processing, glycosylation at Asn-75 and/or Asn-79 is required for interaction with VIP36 while glycosylation at Asn-345 and Asn-402 modulates ligand-mediated GUCY2C activation.

The protein resides in the cell membrane. The protein localises to the endoplasmic reticulum membrane. The catalysed reaction is GTP = 3',5'-cyclic GMP + diphosphate. Its function is as follows. Guanylyl cyclase that catalyzes synthesis of cyclic GMP (cGMP) from GTP. Receptor for the E.coli heat-stable enterotoxin; E.coli enterotoxin markedly stimulates the accumulation of cGMP in mammalian cells expressing GUCY2C. Also activated by the endogenous peptides guanylin and uroguanylin. The sequence is that of Guanylyl cyclase C from Homo sapiens (Human).